A 358-amino-acid polypeptide reads, in one-letter code: RuBisCO accumulation factor 1 (358 aa).

Residues 11-194 (VSAAEAAELI…RQAIEKLLTD (184 aa)) are N-terminal alpha-helix. The segment at 218–344 (ARLIPVAGTF…VVLVLRPKKI (127 aa)) is C-terminal beta-sheet.

It belongs to the RAF family. In terms of assembly, homodimer. Forms an RbcL(8)-Raf1(8) complex. Forms complexes of many stoichiometries with RbcL with and without RbcS. RbcX and Raf1 can bind simultaneously to RbcL. Interacts with both RuBisCO subunits (ccbL, ccbS), GroEL, DnaK and alpha and beta phycocyanin (cpcA, cpcB) in pull-down experiments with tagged protein. C-terminally tagged Raf1 does not interact with either RuBisCO subunit, suggesting its C-terminus is involved in binding.

The protein localises to the cytoplasm. In terms of biological role, a major RuBisCO chaperone. Acts after GroEL-GroES chaperonin to fold and/or assemble the large subunit of RuBisCO (ccbL, rbcL). Cooperates with RbcX in RbcL folding, plays the major role in assembly of dimers into RbcL(8)-Raf1(8) intermediate complexes. RbcS replaces Raf1, leading to holoenzyme formation. Its function is as follows. Required for optimal reconstitution of RbcL(8) upon expression in E.coli. Has been suggested to be involved in RuBisCO recycling and homeostasis rather than assembly. This is RuBisCO accumulation factor 1 from Synechocystis sp. (strain ATCC 27184 / PCC 6803 / Kazusa).